Consider the following 124-residue polypeptide: Con-Ins Tx1 (124 aa).

Positions 1 to 24 (MTTSSYFLLVALGLLLYVFQSSFG) are cleaved as a signal peptide. 4 disulfide bridges follow: Cys-29/Cys-107, Cys-41/Cys-110, Cys-53/Cys-123, and Cys-109/Cys-114. The residue at position 34 (Pro-34) is a 4-hydroxyproline; partial. Positions 59–92 (EQGGANNARANTGRTSSLMKRRGFLSLLKKRGKR) are cleaved as a propeptide — c peptide. A 4-carboxyglutamate; partial modification is found at Glu-118.

Belongs to the insulin family. As to quaternary structure, heterodimer of A and B chains; disulfide-linked. In terms of tissue distribution, expressed by the venom gland.

The protein localises to the secreted. This venom insulin facilitates prey capture by rapidly inducing hypoglycemic shock. Intraperitoneal injection of this peptide into zebrafish lowers blood glucose with the same potency than human insulin. In vivo, when applied to water, this peptide reduces overall locomotor activity of zebrafish larvae, observed as a significant decrease in the percentage of time spent swimming and movement frequency. The chain is Con-Ins Tx1 from Conus textile (Cloth-of-gold cone).